We begin with the raw amino-acid sequence, 72 residues long: UPF0270 protein YheU (72 aa).

Belongs to the UPF0270 family.

This chain is UPF0270 protein YheU, found in Salmonella agona (strain SL483).